A 419-amino-acid polypeptide reads, in one-letter code: Ubiquitin receptor RAD23c (419 aa).

Residues 1–79 (MKIFVKTLKG…IVIMMNKSKP (79 aa)) enclose the Ubiquitin-like domain. Residues 83 to 118 (AASSASAGTSQAKSIPPSTSQPSISPQTPASVSAPV) are compositionally biased toward low complexity. The interval 83-172 (AASSASAGTS…DSAPVGSQGD (90 aa)) is disordered. Positions 119–135 (APAPTRPPPPAPTPTPA) are enriched in pro residues. Residues 136-146 (PVAATETVTTP) are compositionally biased toward low complexity. The 44-residue stretch at 185 to 228 (SNLESTIQQILDMGGGTWDRETVVLALRAAFNNPERAVEYLYTG) folds into the UBA 1 domain. Residues 235–282 (VPPVARPPASAGQPANPPAQTQQPAAAPASGPNANPLDLFPQGLPNVG) form a disordered region. The segment covering 245–270 (AGQPANPPAQTQQPAAAPASGPNANP) has biased composition (low complexity). One can recognise an STI1 domain in the interval 288 to 331 (GTLDFLRNSQQFQALRAMVQANPQVLQPMLQELGKQNPNLMRLI). One can recognise a UBA 2 domain in the interval 372–413 (THEEREAIERLEAMGFERALVLEVFFACNKNEELAANYLLDH).

It belongs to the RAD23 family. As to quaternary structure, interacts with 'Lys-48'-linked polyubiquitin chains via its both UBA domains. Interacts with RPN10 via its ubiquitin-like domain. Widely expressed in the whole plant.

The protein localises to the nucleus. It localises to the cytoplasm. Its function is as follows. May be involved in nucleotide excision repair. Binds and presumably selects ubiquitin-conjugates for destruction. Prefers multiubiquitin chains rather than single ubiquitins, with a binding affinity for 'Lys-48'-linked ubiquitin chains. Acts as a ubiquitin receptor that associates with the 26S proteasomal docking subunit RPN10 for the indirect recognition of ubiquitinated substrates of ubiquitin/26S proteasome-mediated proteolysis (UPP). Involved in UV tolerance in hypocotyls, specifically in dark conditions. This is Ubiquitin receptor RAD23c from Arabidopsis thaliana (Mouse-ear cress).